A 45-amino-acid polypeptide reads, in one-letter code: Globin, minor monomeric component (45 aa).

A Globin domain is found at 1-45; sequence GLSAAERQVVASCWKDIAGADXGAGVGKEXLIKFISAAPEMAAVF.

It belongs to the globin family. Monomer.

In Glycera dibranchiata (Bloodworm), this protein is Globin, minor monomeric component.